The sequence spans 361 residues: UDP-N-acetylglucosamine--N-acetylmuramyl-(pentapeptide) pyrophosphoryl-undecaprenol N-acetylglucosamine transferase (361 aa).

UDP-N-acetyl-alpha-D-glucosamine-binding positions include 13 to 15, N125, R167, S196, I251, 270 to 275, and Q296; these read TGG and ALTVTE.

The protein belongs to the glycosyltransferase 28 family. MurG subfamily.

The protein localises to the cell inner membrane. It carries out the reaction di-trans,octa-cis-undecaprenyl diphospho-N-acetyl-alpha-D-muramoyl-L-alanyl-D-glutamyl-meso-2,6-diaminopimeloyl-D-alanyl-D-alanine + UDP-N-acetyl-alpha-D-glucosamine = di-trans,octa-cis-undecaprenyl diphospho-[N-acetyl-alpha-D-glucosaminyl-(1-&gt;4)]-N-acetyl-alpha-D-muramoyl-L-alanyl-D-glutamyl-meso-2,6-diaminopimeloyl-D-alanyl-D-alanine + UDP + H(+). The protein operates within cell wall biogenesis; peptidoglycan biosynthesis. Cell wall formation. Catalyzes the transfer of a GlcNAc subunit on undecaprenyl-pyrophosphoryl-MurNAc-pentapeptide (lipid intermediate I) to form undecaprenyl-pyrophosphoryl-MurNAc-(pentapeptide)GlcNAc (lipid intermediate II). The protein is UDP-N-acetylglucosamine--N-acetylmuramyl-(pentapeptide) pyrophosphoryl-undecaprenol N-acetylglucosamine transferase of Psychrobacter arcticus (strain DSM 17307 / VKM B-2377 / 273-4).